Consider the following 226-residue polypeptide: HTH-type transcriptional regulator TcmR (226 aa).

Residues 1–16 (MDSAETDTPSTRSTPN) are compositionally biased toward polar residues. The segment at 1–25 (MDSAETDTPSTRSTPNGPGLRQRKL) is disordered. In terms of domain architecture, HTH tetR-type spans 26-86 (RRTRDQLIRE…TPISAIDEAF (61 aa)). The segment at residues 49-68 (TVEQIAEAVEVHPRTFFRHF) is a DNA-binding region (H-T-H motif).

It participates in antibiotic biosynthesis; tetracenomycin C biosynthesis. Its function is as follows. Represses transcription of the divergently oriented tcmR and tcmA (tetracenomycin C resistance and export) genes by binding to an intergenic operator region. This binding is inhibited by tetracenomycin C. The polypeptide is HTH-type transcriptional regulator TcmR (tcmR) (Streptomyces glaucescens).